The chain runs to 89 residues: Small ribosomal subunit protein uS15 (89 aa).

This sequence belongs to the universal ribosomal protein uS15 family. Part of the 30S ribosomal subunit. Forms a bridge to the 50S subunit in the 70S ribosome, contacting the 23S rRNA.

One of the primary rRNA binding proteins, it binds directly to 16S rRNA where it helps nucleate assembly of the platform of the 30S subunit by binding and bridging several RNA helices of the 16S rRNA. In terms of biological role, forms an intersubunit bridge (bridge B4) with the 23S rRNA of the 50S subunit in the ribosome. The protein is Small ribosomal subunit protein uS15 of Leuconostoc mesenteroides subsp. mesenteroides (strain ATCC 8293 / DSM 20343 / BCRC 11652 / CCM 1803 / JCM 6124 / NCDO 523 / NBRC 100496 / NCIMB 8023 / NCTC 12954 / NRRL B-1118 / 37Y).